Reading from the N-terminus, the 632-residue chain is MSLKNDASSSHDGGSNRESVIDDHGRRKSTCGYCKSPARSSISHGLSAQTLTVYDYQALIDRGWRRSGTYLYKHEMDKTCCPPYTIRLKASDFVPTKEQQRVSRRLERFLDGKLDVQPREQRGASSSGDVSDTRRKTLGAAKSEENKKVEAVMDDLSKNIDQAVQLCIRSGEFPSNMQIPKASVKKVFCARRKKLAEGTEQILYTSNIAFPIAAAIKRIQTSEKEGINSAEGNRLSPETISEMLLSAMHKVGETPDVSIKVCKGHINFLSSAKDSFSDRDVVPNGNISRGANSLDGSETLHAKKDSENHQARKRKLEIHLKRSSFDPEEHELYKRYQLKVHNDKPGHVVESSYRRFLVDSPLIDVQPSGDEKVPPCGFGSFHQQYRIDGRLIAVGVVDILPKCLSSVYLFWDPDYAFLSLGKYSAIQEINWVIENQARCPSLQYYYLGYYIHSCSKMRYKAAYRPSELLCPLRFQWVPFEVARPMLDKKPYVILSDIAISHNQCSLLAGASETLVEPAASEHEDMEQGETNDNFMGCSDEDEDEDEDDDDDDDDDEEMYETESEDSHIESDPGSKDNDINNILIGLYGSQYRYKEMRQIITPVGRKQLEPMLQSYRKVVGAELSERMVYEIN.

Over residues 1-18 (MSLKNDASSSHDGGSNRE) the composition is skewed to polar residues. 4 disordered regions span residues 1-27 (MSLKNDASSSHDGGSNRESVIDDHGRR), 113-144 (KLDVQPREQRGASSSGDVSDTRRKTLGAAKSE), 284-312 (NGNISRGANSLDGSETLHAKKDSENHQAR), and 517-580 (PAAS…NDIN). The segment covering 113–122 (KLDVQPREQR) has biased composition (basic and acidic residues). Over residues 285-296 (GNISRGANSLDG) the composition is skewed to polar residues. The span at 298-310 (ETLHAKKDSENHQ) shows a compositional bias: basic and acidic residues. Residues 538–563 (SDEDEDEDEDDDDDDDDDEEMYETES) show a composition bias toward acidic residues. Basic and acidic residues predominate over residues 564–578 (EDSHIESDPGSKDND).

This sequence belongs to the R-transferase family.

It carries out the reaction an N-terminal L-alpha-aminoacyl-[protein] + L-arginyl-tRNA(Arg) = an N-terminal L-arginyl-L-aminoacyl-[protein] + tRNA(Arg) + H(+). In terms of biological role, involved in the post-translational conjugation of arginine to the N-terminal aspartate or glutamate of a protein. This arginylation is required for degradation of the protein via the ubiquitin pathway. Component of the N-end rule pathway with ATE2 and PRT6. The N-end rule pathway regulates seed after-ripening, seedling sugar sensitivity, seedling lipid breakdown, and abscisic acid (ABA) sensitivity of germination. The end-rule pathway regulates various aspects of leaf and shoot development. Involved in the oxygen-dependent N-arginylation of RAP2-12, an activator of hypoxic gene expression. This N-terminal modification leads to ubiquitination by PRT6 and subsequent degradation of RAP2-12 under aerobic conditions. Has an important role in the progression of leaf senescence. Involved in disease resistance. The end-rule pathway plays a role in regulating the timing and amplitude of the immune response following infection with the bacterial pathogen Pseudomonas syringae pv tomato. Regulates the biosynthesis of plant-defense metabolites such as glucosinolates, and the biosynthesis and response to the phytohormone jasmonate (JA), which plays a key role in plant immunity. In Arabidopsis thaliana (Mouse-ear cress), this protein is Arginyl-tRNA--protein transferase 1.